The following is a 215-amino-acid chain: 3-isopropylmalate dehydratase small subunit (215 aa).

The protein belongs to the LeuD family. LeuD type 1 subfamily. Heterodimer of LeuC and LeuD.

The enzyme catalyses (2R,3S)-3-isopropylmalate = (2S)-2-isopropylmalate. The protein operates within amino-acid biosynthesis; L-leucine biosynthesis; L-leucine from 3-methyl-2-oxobutanoate: step 2/4. In terms of biological role, catalyzes the isomerization between 2-isopropylmalate and 3-isopropylmalate, via the formation of 2-isopropylmaleate. The polypeptide is 3-isopropylmalate dehydratase small subunit (Acinetobacter baumannii (strain AB307-0294)).